Here is a 166-residue protein sequence, read N- to C-terminus: Protein-export protein SecB (166 aa).

Belongs to the SecB family. As to quaternary structure, homotetramer, a dimer of dimers. One homotetramer interacts with 1 SecA dimer.

It is found in the cytoplasm. One of the proteins required for the normal export of preproteins out of the cell cytoplasm. It is a molecular chaperone that binds to a subset of precursor proteins, maintaining them in a translocation-competent state. It also specifically binds to its receptor SecA. This chain is Protein-export protein SecB, found in Cereibacter sphaeroides (strain ATCC 17025 / ATH 2.4.3) (Rhodobacter sphaeroides).